A 134-amino-acid polypeptide reads, in one-letter code: MKQNLLILLSLLLVVVAIMWWLYEKKKEVPLPPPTPPTPPTPTGVPFLPMYAGLSSPVQYNPADYLYGWEKYPHGPAWSFGDRVPYAEAKNALGGHFGGGLYSPRDPILESKLGGVYIGNDLYTVGGVGGDGHW.

The chain crosses the membrane as a helical span at residues 4 to 24 (NLLILLSLLLVVVAIMWWLYE).

The protein resides in the membrane. This is an uncharacterized protein from Invertebrate iridescent virus 6 (IIV-6).